The primary structure comprises 524 residues: Cytochrome P450 monooxygenase oblB (524 aa).

3 helical membrane passes run 18-38 (ILNAGIAIAGLSAAYAIGLVI), 225-245 (FHSGVVTLPLFMGLPWLIHLI), and 322-342 (VLIGSGTMTTAGTMCFLVYYI). Position 466 (Cys-466) interacts with heme.

Belongs to the cytochrome P450 family. It depends on heme as a cofactor.

The protein localises to the membrane. It carries out the reaction ophiobolin F + 4 reduced [NADPH--hemoprotein reductase] + 4 O2 = ophiobolin C + 4 oxidized [NADPH--hemoprotein reductase] + 6 H2O + 4 H(+). It participates in secondary metabolite biosynthesis; terpenoid biosynthesis. In terms of biological role, cytochrome P450 monooxygenase; part of the gene cluster that mediates the biosynthesis of the sesterterpenes ophiobolins, fungal phytotoxins with potential anti-cancer activities. The first step of the pathway is performed by the sesterterpene synthase oblA that possesses both prenyl transferase and terpene cyclase activity, converting isopentenyl diphosphate and dimethylallyl diphosphate into geranylfarnesyl diphosphate (GFPP) and further converting GFPP into ophiobolin F, respectively. Other sesterterpenoids (C(25) terpenoids) are found as minor products of oblA. The cytochrome P450 monooxygenase oblB then catalyzes a four-step oxidative transformation of ophiobolin F to yield ophiobolin C. The FAD-dependent oxidoreductase oblC might be involved in a later oxidation step that produces ophiobolin A. The chain is Cytochrome P450 monooxygenase oblB from Cochliobolus heterostrophus (strain C5 / ATCC 48332 / race O) (Southern corn leaf blight fungus).